A 50-amino-acid polypeptide reads, in one-letter code: Ribosome-inactivating protein lyophyllin (50 aa).

The catalysed reaction is Endohydrolysis of the N-glycosidic bond at one specific adenosine on the 28S rRNA.. In terms of biological role, N-glycosylase that inhibits protein synthesis by depurinating ribosomal rRNA, and thus acts as a ribosomal inactivating protein (RIP). Has adenine polynucleotide glycosidase activity on the poly(A) substrate A30-ssDNA. Inhibits cell-free translation in rabbit reticulocyte lysate system with an IC(50) of 1 nM. May function in the defense response to pathogens. Displays antifungal activity against C.comatus and P.piricola, but not against R.solani, M.arachidicola and C.gossypii. Inhibits mycelial growth in P.piricola with an IC(50) of 2.5 uM. Has cytotoxic activity against the human cancer cell lines Hela, HepG2, and JAR, with IC(50) of 358.8, 489.8, and 926.9 nM respectively. It also inhibits HIV-1 reverse transcriptase activity (IC(50)=7.9 nM) and disrupts mouse embryonic development. This is Ribosome-inactivating protein lyophyllin from Lyophyllum shimeji (Hon-shimeji).